The following is a 62-amino-acid chain: uncharacterized protein (62 aa).

Residues Ile17 to Ile37 traverse the membrane as a helical segment.

The protein resides in the membrane. This is an uncharacterized protein from Helicobacter pylori (strain J99 / ATCC 700824) (Campylobacter pylori J99).